The sequence spans 87 residues: Translation initiation factor IF-1 1 (87 aa).

The S1-like domain maps to 1-72 (MAKEELLELD…TKGRINFRHK (72 aa)). The tract at residues 68 to 87 (NFRHKDANSPRPPRTGQPRR) is disordered. Over residues 77–87 (PRPPRTGQPRR) the composition is skewed to pro residues.

This sequence belongs to the IF-1 family. Component of the 30S ribosomal translation pre-initiation complex which assembles on the 30S ribosome in the order IF-2 and IF-3, IF-1 and N-formylmethionyl-tRNA(fMet); mRNA recruitment can occur at any time during PIC assembly.

The protein localises to the cytoplasm. Functionally, one of the essential components for the initiation of protein synthesis. Stabilizes the binding of IF-2 and IF-3 on the 30S subunit to which N-formylmethionyl-tRNA(fMet) subsequently binds. Helps modulate mRNA selection, yielding the 30S pre-initiation complex (PIC). Upon addition of the 50S ribosomal subunit IF-1, IF-2 and IF-3 are released leaving the mature 70S translation initiation complex. The polypeptide is Translation initiation factor IF-1 1 (Burkholderia lata (strain ATCC 17760 / DSM 23089 / LMG 22485 / NCIMB 9086 / R18194 / 383)).